The sequence spans 376 residues: Dehydrogenase/reductase SDR family member FEY (376 aa).

The residue at position 2 (S2) is an N-acetylserine. 61 to 85 (VVTGSTSGIGRETARQLAEAGAHVV) is an NAD(+) binding site. A substrate-binding site is contributed by S199. The active-site Proton acceptor is the Y227.

It belongs to the short-chain dehydrogenases/reductases (SDR) family. In terms of tissue distribution, expressed in roots, stems, leaves and flowers and, at lower levels, in siliques.

Its function is as follows. Putative oxidoreductase. Required for vegetative shoot apex development, especially during leaf positioning and for shoot apical meristem (SAM) maintenance. The polypeptide is Dehydrogenase/reductase SDR family member FEY (Arabidopsis thaliana (Mouse-ear cress)).